A 76-amino-acid chain; its full sequence is MEKLTILLLVAAVLMSTQALMQEQRQKAKINLFSKRKPSAERRWVDVGCTFLLGSCTADAECCSDNCVETYCDLWW.

An N-terminal signal peptide occupies residues 1-19 (MEKLTILLLVAAVLMSTQA). Residues 20 to 41 (LMQEQRQKAKINLFSKRKPSAE) constitute a propeptide that is removed on maturation. 3 disulfides stabilise this stretch: C49–C63, C56–C67, and C62–C72.

This sequence belongs to the conotoxin O2 superfamily. As to expression, expressed by the venom duct.

The protein resides in the secreted. In terms of biological role, inhibits voltage-gated ion channels. The polypeptide is Conotoxin Vc6.9 (Conus victoriae (Queen Victoria cone)).